A 134-amino-acid chain; its full sequence is Putative esterase PA0474 (134 aa).

This sequence belongs to the thioesterase PaaI family.

In Pseudomonas aeruginosa (strain ATCC 15692 / DSM 22644 / CIP 104116 / JCM 14847 / LMG 12228 / 1C / PRS 101 / PAO1), this protein is Putative esterase PA0474.